Consider the following 289-residue polypeptide: tRNA(Ile)-lysidine synthase (289 aa).

S11–S16 lines the ATP pocket.

It belongs to the tRNA(Ile)-lysidine synthase family.

The protein resides in the cytoplasm. It carries out the reaction cytidine(34) in tRNA(Ile2) + L-lysine + ATP = lysidine(34) in tRNA(Ile2) + AMP + diphosphate + H(+). Its function is as follows. Ligates lysine onto the cytidine present at position 34 of the AUA codon-specific tRNA(Ile) that contains the anticodon CAU, in an ATP-dependent manner. Cytidine is converted to lysidine, thus changing the amino acid specificity of the tRNA from methionine to isoleucine. This is tRNA(Ile)-lysidine synthase from Mycoplasma pneumoniae (strain ATCC 29342 / M129 / Subtype 1) (Mycoplasmoides pneumoniae).